Reading from the N-terminus, the 254-residue chain is Probable glutathione transferase omega-2 (254 aa).

The GST N-terminal domain maps to 25-105 (GTIRIYNMRY…YLDDIYPEPR (81 aa)). Residue Cys35 is the Nucleophile of the active site. Residues Lys62, Val75, and 89–90 (ES) each bind glutathione. Residues 110–239 (DHYEKVQQKL…SQPTETAVEF (130 aa)) form the GST C-terminal domain.

The protein belongs to the GST superfamily. Omega family.

It catalyses the reaction RX + glutathione = an S-substituted glutathione + a halide anion + H(+). The enzyme catalyses L-dehydroascorbate + 2 glutathione = glutathione disulfide + L-ascorbate. It carries out the reaction methylarsonate + 2 glutathione + H(+) = methylarsonous acid + glutathione disulfide + H2O. Exhibits glutathione-dependent thiol transferase activity. Has dehydroascorbate reductase activity and may contribute to the recycling of ascorbic acid. Participates in the biotransformation of inorganic arsenic and reduces monomethylarsonic acid (MMA). The protein is Probable glutathione transferase omega-2 (gsto-2) of Caenorhabditis elegans.